The primary structure comprises 296 residues: Ribosomal RNA small subunit methyltransferase A (296 aa).

S-adenosyl-L-methionine-binding residues include asparagine 32, leucine 34, glycine 59, glutamate 80, aspartate 105, and asparagine 130.

The protein belongs to the class I-like SAM-binding methyltransferase superfamily. rRNA adenine N(6)-methyltransferase family. RsmA subfamily.

The protein localises to the cytoplasm. It catalyses the reaction adenosine(1518)/adenosine(1519) in 16S rRNA + 4 S-adenosyl-L-methionine = N(6)-dimethyladenosine(1518)/N(6)-dimethyladenosine(1519) in 16S rRNA + 4 S-adenosyl-L-homocysteine + 4 H(+). Its function is as follows. Specifically dimethylates two adjacent adenosines (A1518 and A1519) in the loop of a conserved hairpin near the 3'-end of 16S rRNA in the 30S particle. May play a critical role in biogenesis of 30S subunits. The sequence is that of Ribosomal RNA small subunit methyltransferase A from Ligilactobacillus salivarius (strain UCC118) (Lactobacillus salivarius).